A 361-amino-acid chain; its full sequence is Chorismate synthase (361 aa).

Arginine 48 and arginine 54 together coordinate NADP(+). Residues 125–127 (RSS), 238–239 (NA), glycine 278, 293–297 (KPTSS), and arginine 319 each bind FMN.

The protein belongs to the chorismate synthase family. Homotetramer. It depends on FMNH2 as a cofactor.

It carries out the reaction 5-O-(1-carboxyvinyl)-3-phosphoshikimate = chorismate + phosphate. It participates in metabolic intermediate biosynthesis; chorismate biosynthesis; chorismate from D-erythrose 4-phosphate and phosphoenolpyruvate: step 7/7. Its function is as follows. Catalyzes the anti-1,4-elimination of the C-3 phosphate and the C-6 proR hydrogen from 5-enolpyruvylshikimate-3-phosphate (EPSP) to yield chorismate, which is the branch point compound that serves as the starting substrate for the three terminal pathways of aromatic amino acid biosynthesis. This reaction introduces a second double bond into the aromatic ring system. This is Chorismate synthase from Pectobacterium atrosepticum (strain SCRI 1043 / ATCC BAA-672) (Erwinia carotovora subsp. atroseptica).